A 36-amino-acid polypeptide reads, in one-letter code: Neurotoxin PRTx26An0C3 (36 aa).

Intrachain disulfides connect Cys-3–Cys-17, Cys-10–Cys-22, and Cys-16–Cys-34.

As to expression, expressed by the venom gland.

Its subcellular location is the secreted. Neurotoxin. Causes spastic paralysis and death in mice. Moderate inhibitor of L-type calcium channels (Cav1/CACNA1). The sequence is that of Neurotoxin PRTx26An0C3 from Phoneutria nigriventer (Brazilian armed spider).